Consider the following 253-residue polypeptide: Ditrans,polycis-undecaprenyl-diphosphate synthase ((2E,6E)-farnesyl-diphosphate specific) (253 aa).

Asp-26 is a catalytic residue. Asp-26 is a binding site for Mg(2+). Residues 27–30 (GNGR), Trp-31, Arg-39, His-43, and 71–73 (SSE) each bind substrate. Catalysis depends on Asn-74, which acts as the Proton acceptor. Substrate is bound by residues Trp-75, Arg-77, and Arg-194. His-199 contacts Mg(2+). 200–202 (RIS) provides a ligand contact to substrate. Mg(2+) is bound at residue Glu-213.

The protein belongs to the UPP synthase family. As to quaternary structure, homodimer. It depends on Mg(2+) as a cofactor.

It carries out the reaction 8 isopentenyl diphosphate + (2E,6E)-farnesyl diphosphate = di-trans,octa-cis-undecaprenyl diphosphate + 8 diphosphate. Functionally, catalyzes the sequential condensation of isopentenyl diphosphate (IPP) with (2E,6E)-farnesyl diphosphate (E,E-FPP) to yield (2Z,6Z,10Z,14Z,18Z,22Z,26Z,30Z,34E,38E)-undecaprenyl diphosphate (di-trans,octa-cis-UPP). UPP is the precursor of glycosyl carrier lipid in the biosynthesis of bacterial cell wall polysaccharide components such as peptidoglycan and lipopolysaccharide. This Shigella flexneri protein is Ditrans,polycis-undecaprenyl-diphosphate synthase ((2E,6E)-farnesyl-diphosphate specific).